We begin with the raw amino-acid sequence, 224 residues long: N-terminal Xaa-Pro-Lys N-methyltransferase 1 (224 aa).

Residues G70, R75, 92 to 94 (DVT), 120 to 121 (LQ), and Q136 contribute to the S-adenosyl-L-methionine site.

The protein belongs to the methyltransferase superfamily. NTM1 family.

The protein resides in the nucleus. The enzyme catalyses N-terminal L-alanyl-L-prolyl-L-lysyl-[protein] + 3 S-adenosyl-L-methionine = N-terminal N,N,N-trimethyl-L-alanyl-L-prolyl-L-lysyl-[protein] + 3 S-adenosyl-L-homocysteine + 3 H(+). It catalyses the reaction N-terminal L-seryl-L-prolyl-L-lysyl-[protein] + 3 S-adenosyl-L-methionine = N-terminal N,N,N-trimethyl-L-seryl-L-prolyl-L-lysyl-[protein] + 3 S-adenosyl-L-homocysteine + 3 H(+). It carries out the reaction N-terminal L-prolyl-L-prolyl-L-lysyl-[protein] + 2 S-adenosyl-L-methionine = N-terminal N,N-dimethyl-L-prolyl-L-prolyl-L-lysyl-[protein] + 2 S-adenosyl-L-homocysteine + 2 H(+). In terms of biological role, distributive alpha-N-methyltransferase that methylates the N-terminus of target proteins containing the N-terminal motif [Ala/Gly/Pro/Ser]-Pro-Lys when the initiator Met is cleaved. Specifically catalyzes mono-, di- or tri-methylation of the exposed alpha-amino group of the Ala, Gly or Ser residue in the [Ala/Gly/Ser]-Pro-Lys motif and mono- or di-methylation of Pro in the Pro-Pro-Lys motif. Required during mitosis for normal bipolar spindle formation and chromosome segregation via its action on target proteins. The chain is N-terminal Xaa-Pro-Lys N-methyltransferase 1 (ntmt1) from Xenopus tropicalis (Western clawed frog).